Reading from the N-terminus, the 332-residue chain is Holliday junction branch migration complex subunit RuvB (332 aa).

A large ATPase domain (RuvB-L) region spans residues 1-181 (MARILDNNVM…FGITGHMEYY (181 aa)). ATP contacts are provided by residues leucine 20, arginine 21, glycine 62, lysine 65, threonine 66, threonine 67, 128 to 130 (EDF), arginine 171, tyrosine 181, and arginine 218. Mg(2+) is bound at residue threonine 66. Positions 182–252 (QEKDLTEIVE…ITDRALTMLD (71 aa)) are small ATPAse domain (RuvB-S). Positions 255–332 (REGLDYIDQK…RHLGYPYQNT (78 aa)) are head domain (RuvB-H). Arginine 291, arginine 310, arginine 312, and arginine 315 together coordinate DNA.

Belongs to the RuvB family. Homohexamer. Forms an RuvA(8)-RuvB(12)-Holliday junction (HJ) complex. HJ DNA is sandwiched between 2 RuvA tetramers; dsDNA enters through RuvA and exits via RuvB. An RuvB hexamer assembles on each DNA strand where it exits the tetramer. Each RuvB hexamer is contacted by two RuvA subunits (via domain III) on 2 adjacent RuvB subunits; this complex drives branch migration. In the full resolvosome a probable DNA-RuvA(4)-RuvB(12)-RuvC(2) complex forms which resolves the HJ.

Its subcellular location is the cytoplasm. It catalyses the reaction ATP + H2O = ADP + phosphate + H(+). Its function is as follows. The RuvA-RuvB-RuvC complex processes Holliday junction (HJ) DNA during genetic recombination and DNA repair, while the RuvA-RuvB complex plays an important role in the rescue of blocked DNA replication forks via replication fork reversal (RFR). RuvA specifically binds to HJ cruciform DNA, conferring on it an open structure. The RuvB hexamer acts as an ATP-dependent pump, pulling dsDNA into and through the RuvAB complex. RuvB forms 2 homohexamers on either side of HJ DNA bound by 1 or 2 RuvA tetramers; 4 subunits per hexamer contact DNA at a time. Coordinated motions by a converter formed by DNA-disengaged RuvB subunits stimulates ATP hydrolysis and nucleotide exchange. Immobilization of the converter enables RuvB to convert the ATP-contained energy into a lever motion, pulling 2 nucleotides of DNA out of the RuvA tetramer per ATP hydrolyzed, thus driving DNA branch migration. The RuvB motors rotate together with the DNA substrate, which together with the progressing nucleotide cycle form the mechanistic basis for DNA recombination by continuous HJ branch migration. Branch migration allows RuvC to scan DNA until it finds its consensus sequence, where it cleaves and resolves cruciform DNA. This is Holliday junction branch migration complex subunit RuvB from Streptococcus pyogenes serotype M1.